The chain runs to 129 residues: Small ribosomal subunit protein uS11 (129 aa).

A disordered region spans residues Ile-107 to Val-129.

This sequence belongs to the universal ribosomal protein uS11 family. As to quaternary structure, part of the 30S ribosomal subunit.

Functionally, located on the platform of the 30S subunit. In Methanoculleus marisnigri (strain ATCC 35101 / DSM 1498 / JR1), this protein is Small ribosomal subunit protein uS11.